Consider the following 61-residue polypeptide: Large ribosomal subunit protein bL28 (61 aa).

The protein belongs to the bacterial ribosomal protein bL28 family.

This Lactobacillus johnsonii (strain CNCM I-12250 / La1 / NCC 533) protein is Large ribosomal subunit protein bL28.